The sequence spans 294 residues: Acetylglutamate kinase (294 aa).

Substrate-binding positions include 47-48 (GG), arginine 69, and asparagine 168.

It belongs to the acetylglutamate kinase family. ArgB subfamily.

The protein resides in the cytoplasm. It carries out the reaction N-acetyl-L-glutamate + ATP = N-acetyl-L-glutamyl 5-phosphate + ADP. It participates in amino-acid biosynthesis; L-arginine biosynthesis; N(2)-acetyl-L-ornithine from L-glutamate: step 2/4. Its function is as follows. Catalyzes the ATP-dependent phosphorylation of N-acetyl-L-glutamate. This Corynebacterium glutamicum (strain ATCC 13032 / DSM 20300 / JCM 1318 / BCRC 11384 / CCUG 27702 / LMG 3730 / NBRC 12168 / NCIMB 10025 / NRRL B-2784 / 534) protein is Acetylglutamate kinase.